We begin with the raw amino-acid sequence, 139 residues long: Large-conductance mechanosensitive channel (139 aa).

Helical transmembrane passes span 16–36 (VIDL…VDSL) and 83–103 (GQFI…FVAV).

The protein belongs to the MscL family. Homopentamer.

Its subcellular location is the cell inner membrane. In terms of biological role, channel that opens in response to stretch forces in the membrane lipid bilayer. May participate in the regulation of osmotic pressure changes within the cell. In Aromatoleum aromaticum (strain DSM 19018 / LMG 30748 / EbN1) (Azoarcus sp. (strain EbN1)), this protein is Large-conductance mechanosensitive channel.